We begin with the raw amino-acid sequence, 163 residues long: Lipoprotein signal peptidase (163 aa).

Transmembrane regions (helical) follow at residues 8-28 (FFLLGLILTVGIDQAVKYWVM), 61-81 (FSHWGLIFLTLIILIFLLWLW), and 93-113 (FGFTLIIGGAIGNLIDRICFY). Residues aspartate 117 and aspartate 136 contribute to the active site. A helical membrane pass occupies residues 128-148 (YFAVFNLADTFITLGVIAIII).

Belongs to the peptidase A8 family.

The protein resides in the cell inner membrane. It carries out the reaction Release of signal peptides from bacterial membrane prolipoproteins. Hydrolyzes -Xaa-Yaa-Zaa-|-(S,diacylglyceryl)Cys-, in which Xaa is hydrophobic (preferably Leu), and Yaa (Ala or Ser) and Zaa (Gly or Ala) have small, neutral side chains.. Its pathway is protein modification; lipoprotein biosynthesis (signal peptide cleavage). This protein specifically catalyzes the removal of signal peptides from prolipoproteins. This Bartonella henselae (strain ATCC 49882 / DSM 28221 / CCUG 30454 / Houston 1) (Rochalimaea henselae) protein is Lipoprotein signal peptidase.